Reading from the N-terminus, the 250-residue chain is F-box only protein 17 (250 aa).

One can recognise an F-box domain in the interval 15 to 62 (HMALAELPPELLLQVLSHVPPRALVTRCRPVCRAWRDLVDGPSVWLLQ). The region spanning 99–250 (FCLLAPLGRN…GLLQGLSRLH (152 aa)) is the FBA domain.

In terms of assembly, part of a SCF (SKP1-cullin-F-box) protein ligase complex. Interacts with SKP1 and CUL1.

Its function is as follows. Substrate-recognition component of the SCF (SKP1-CUL1-F-box protein)-type E3 ubiquitin ligase complex. Able to recognize and bind denatured glycoproteins, which are modified with complex-type oligosaccharides. Also recognizes sulfated glycans. Does not bind high-mannose glycoproteins. The sequence is that of F-box only protein 17 (Fbxo17) from Rattus norvegicus (Rat).